Consider the following 349-residue polypeptide: Mannonate dehydratase (349 aa).

It belongs to the mannonate dehydratase family. It depends on Fe(2+) as a cofactor. The cofactor is Mn(2+).

The enzyme catalyses D-mannonate = 2-dehydro-3-deoxy-D-gluconate + H2O. The protein operates within carbohydrate metabolism; pentose and glucuronate interconversion. Catalyzes the dehydration of D-mannonate. The protein is Mannonate dehydratase of Oceanobacillus iheyensis (strain DSM 14371 / CIP 107618 / JCM 11309 / KCTC 3954 / HTE831).